The primary structure comprises 634 residues: MPIVVLSAQTINKIAAGEVIDCPASVVKELVENSIDAGAKTINVHVDKGGRNLISVSDDGCGIACEEMEKAFIGHATSKLIDGDLANVKTMGFRGEGLTAVASVARVKMVSKHVDAERAWSITFEGGEKTRDLTPGVLSCGTHVEVRDLFFATPTRLKFLRTEKAEMQNIVDLLNRLAMINYTIAFSLTIVERQIFKYSAQESLIERLKEMRAFGEVFCEQSLEINHSIDHVRVYGHIGLPTFNKSKPGMVHTFVNGRPIYSTLLLGAVKSAYHGLIPKDRHPVVVLALDVMPAYVDVNVHPSKMEVRFQDKRLVYKAVLDALGEALSSNVYARFSPAATTSEGHDHFAMDSIEKTYGKFFSEDTEAASTMQLQPEVLNHNIPLLFGSSHVDDSKGTHDTRFCADHTHHNDTKGSVHTKSFSARSSSSAESKMEQGCMLEEPPLGYAVCQLFERYIISRAGDYVIIVDQHAAHERLVCEYIKKVTEQEGIKRQVLLMPEFIELGNEYELELLTEYREKLRDLGLIVEPMGDLTVVVREVPAIFGVVDAKALISKILESIMAKGDELFVKGKLSHICGTVACYSSIRSGRIMKLEEMNSLLRHMESTPHSGQCNHGRPTYVKLKLSEIDKLFERT.

The disordered stretch occupies residues 406–427 (HTHHNDTKGSVHTKSFSARSSS).

Belongs to the DNA mismatch repair MutL/HexB family.

Functionally, this protein is involved in the repair of mismatches in DNA. It is required for dam-dependent methyl-directed DNA mismatch repair. May act as a 'molecular matchmaker', a protein that promotes the formation of a stable complex between two or more DNA-binding proteins in an ATP-dependent manner without itself being part of a final effector complex. This Anaplasma phagocytophilum (strain HZ) protein is DNA mismatch repair protein MutL.